Reading from the N-terminus, the 176-residue chain is Peptide deformylase 1 (176 aa).

2 residues coordinate Fe cation: Cys99 and His141. Glu142 is a catalytic residue. Residue His145 participates in Fe cation binding.

Belongs to the polypeptide deformylase family. Fe(2+) serves as cofactor.

The enzyme catalyses N-terminal N-formyl-L-methionyl-[peptide] + H2O = N-terminal L-methionyl-[peptide] + formate. Its function is as follows. Removes the formyl group from the N-terminal Met of newly synthesized proteins. Requires at least a dipeptide for an efficient rate of reaction. N-terminal L-methionine is a prerequisite for activity but the enzyme has broad specificity at other positions. The polypeptide is Peptide deformylase 1 (Bordetella pertussis (strain Tohama I / ATCC BAA-589 / NCTC 13251)).